We begin with the raw amino-acid sequence, 247 residues long: MFNAIVSADTLQATLDSVSVLVDECKIHLEEDGLEIRAVDPANVGMVDLRLDAAAFESYETDGGLIGVNLSRLEDIAGMADAGQLVHLDLDEETRKLHISIDGLEYTLALIDPDSIRQEPDLPDLDLSANIVIEGKDIDRSVTAADMVSDHIALGVDATDELFYVDAEGDTDDVHLELTRDDLIDLTPGDAHSLFSLDYLKNMNKAIPKDAEVEMELGEEFPVKMHFSFAEGQGRVTYMLAPRIQSE.

The protein belongs to the PCNA family. As to quaternary structure, homotrimer. The subunits circularize to form a toroid; DNA passes through its center. Replication factor C (RFC) is required to load the toroid on the DNA.

Its function is as follows. Sliding clamp subunit that acts as a moving platform for DNA processing. Responsible for tethering the catalytic subunit of DNA polymerase and other proteins to DNA during high-speed replication. The protein is DNA polymerase sliding clamp of Haloarcula marismortui (strain ATCC 43049 / DSM 3752 / JCM 8966 / VKM B-1809) (Halobacterium marismortui).